Reading from the N-terminus, the 520-residue chain is GMP synthase [glutamine-hydrolyzing] (520 aa).

The Glutamine amidotransferase type-1 domain occupies 4-202; that stretch reads KILILDFGSQ…VHDICGCGSD (199 aa). Cys81 functions as the Nucleophile in the catalytic mechanism. Residues His176 and Glu178 contribute to the active site. One can recognise a GMPS ATP-PPase domain in the interval 203 to 395; the sequence is WNMPDYVEEA…LGLPHDMVYR (193 aa). An ATP-binding site is contributed by 230 to 236; it reads SGGVDSS.

As to quaternary structure, homodimer.

The catalysed reaction is XMP + L-glutamine + ATP + H2O = GMP + L-glutamate + AMP + diphosphate + 2 H(+). The protein operates within purine metabolism; GMP biosynthesis; GMP from XMP (L-Gln route): step 1/1. Its function is as follows. Catalyzes the synthesis of GMP from XMP. The protein is GMP synthase [glutamine-hydrolyzing] of Thiobacillus denitrificans (strain ATCC 25259 / T1).